The sequence spans 202 residues: Small ribosomal subunit protein uS4 (202 aa).

Positions Ser94–Leu157 constitute an S4 RNA-binding domain.

This sequence belongs to the universal ribosomal protein uS4 family. As to quaternary structure, part of the 30S ribosomal subunit. Contacts protein S5. The interaction surface between S4 and S5 is involved in control of translational fidelity.

Functionally, one of the primary rRNA binding proteins, it binds directly to 16S rRNA where it nucleates assembly of the body of the 30S subunit. In terms of biological role, with S5 and S12 plays an important role in translational accuracy. This chain is Small ribosomal subunit protein uS4, found in Ureaplasma urealyticum serovar 10 (strain ATCC 33699 / Western).